The following is a 291-amino-acid chain: MTQLSAAQTPQPKPADGNRALYGGKINRRITVRDITAAKERGEKWPMLTAYDAMTASVFDESGIPVMLVGDSAGNCHLGYETTVPVTLDEMTMLSAAVVRGTSRALIVGDLPFGSYQEGPVQALRSATRLVKEAGVGAVKLEGGERSHRQIELLVESGIPVMAHIGLTPQSVNSMGYRVQGRGEEAAQQLLRDAKAVQDAGAFAVVLELVPAELAAEVTRTLHIPTVGIGAGPDTDAQVLVWTDMLGLTGGRMPKFVKQYADLRKVMGDAAKAYAEDVVGGTFPADEHSVH.

Positions 1 to 10 (MTQLSAAQTP) are enriched in polar residues. The segment at 1 to 20 (MTQLSAAQTPQPKPADGNRA) is disordered. Mg(2+) contacts are provided by Asp71 and Asp110. Residues 71–72 (DS), Asp110, and Lys140 contribute to the 3-methyl-2-oxobutanoate site. Glu142 lines the Mg(2+) pocket. Catalysis depends on Glu208, which acts as the Proton acceptor.

The protein belongs to the PanB family. Homodecamer; pentamer of dimers. Mg(2+) serves as cofactor.

It is found in the cytoplasm. It carries out the reaction 3-methyl-2-oxobutanoate + (6R)-5,10-methylene-5,6,7,8-tetrahydrofolate + H2O = 2-dehydropantoate + (6S)-5,6,7,8-tetrahydrofolate. It functions in the pathway cofactor biosynthesis; (R)-pantothenate biosynthesis; (R)-pantoate from 3-methyl-2-oxobutanoate: step 1/2. Functionally, catalyzes the reversible reaction in which hydroxymethyl group from 5,10-methylenetetrahydrofolate is transferred onto alpha-ketoisovalerate to form ketopantoate. This is 3-methyl-2-oxobutanoate hydroxymethyltransferase from Streptomyces coelicolor (strain ATCC BAA-471 / A3(2) / M145).